Reading from the N-terminus, the 481-residue chain is Surface lipoprotein assembly modifier 1 (481 aa).

Residues 1 to 23 (MSIQTKFILFLSSSLFLTPYSVA) form the signal peptide. An N-terminal domain region spans residues 25-192 (EKSPQPHDGR…QYLSALNQRD (168 aa)). The interval 193–481 (QWKIQGGFSF…RIYVEISKTF (289 aa)) is C-terminal probable beta barrel. The next 14 membrane-spanning stretches (beta stranded) occupy residues 194–204 (WKIQGGFSFLN), 233–243 (SYFGNAEKKWS), 248–258 (HFTKLSLEGSG), 271–281 (NARAGVGLGYQ), 285–295 (FELSLMPFTEK), 315–325 (SGARLDLSNWL), 329–338 (WQISTALEYG), 353–363 (YLASATLLYLA), 368–377 (YWFGGADYNR), 390–400 (KNVRLGWGQEW), 405–414 (STRLILNYAR), 432–441 (YASVLTIWHR), 448–458 (ITPKLSWSYQK), and 471–481 (NRIYVEISKTF).

It belongs to the Slam family.

The protein resides in the cell outer membrane. In terms of biological role, required for correct export to the cell surface of some cell outer membrane lipoproteins. This Haemophilus influenzae (strain ATCC 51907 / DSM 11121 / KW20 / Rd) protein is Surface lipoprotein assembly modifier 1.